Here is a 301-residue protein sequence, read N- to C-terminus: Probable protein phosphatase 2C 4 (301 aa).

Positions 1 to 18 (MGPYLSQPNKNKTTTSGE) are enriched in polar residues. The tract at residues 1–20 (MGPYLSQPNKNKTTTSGEGK) is disordered. The PPM-type phosphatase domain maps to 23 to 298 (IFAASEMQGW…DNMTTLIIYL (276 aa)). Positions 57, 58, 237, and 289 each coordinate Mn(2+).

This sequence belongs to the PP2C family. It depends on Mg(2+) as a cofactor. Mn(2+) is required as a cofactor.

The protein localises to the membrane. It catalyses the reaction O-phospho-L-seryl-[protein] + H2O = L-seryl-[protein] + phosphate. The enzyme catalyses O-phospho-L-threonyl-[protein] + H2O = L-threonyl-[protein] + phosphate. In terms of biological role, enzyme with a broad specificity. This chain is Probable protein phosphatase 2C 4, found in Paramecium tetraurelia.